Consider the following 1363-residue polypeptide: Xanthine dehydrogenase (1363 aa).

One can recognise a 2Fe-2S ferredoxin-type domain in the interval 35 to 121 (DTIRFYLNGT…GKHVITVEGI (87 aa)). [2Fe-2S] cluster-binding residues include cysteine 73, cysteine 78, cysteine 81, cysteine 103, cysteine 142, cysteine 145, cysteine 177, and cysteine 179. The region spanning 266-450 (FGNKRKKWYR…SSLRIPTASE (185 aa)) is the FAD-binding PCMH-type domain. FAD is bound by residues 294-301 (LIGGSTET), phenylalanine 374, 384-388 (SPAGN), aspartate 397, and lysine 459. Mo-molybdopterin is bound by residues glutamine 798 and phenylalanine 829. Substrate is bound by residues glutamate 833 and arginine 911. Arginine 943 is a Mo-molybdopterin binding site. Substrate is bound by residues phenylalanine 945 and threonine 1041. Position 1110 (alanine 1110) interacts with Mo-molybdopterin. Glutamate 1295 (proton acceptor) is an active-site residue.

It belongs to the xanthine dehydrogenase family. FAD serves as cofactor. The cofactor is Mo-molybdopterin. Requires [2Fe-2S] cluster as cofactor.

It is found in the peroxisome. The catalysed reaction is xanthine + NAD(+) + H2O = urate + NADH + H(+). It catalyses the reaction hypoxanthine + NAD(+) + H2O = xanthine + NADH + H(+). Functionally, key enzyme in purine degradation. Catalyzes the oxidation of hypoxanthine to xanthine. Catalyzes the oxidation of xanthine to uric acid. The sequence is that of Xanthine dehydrogenase (hxA) from Emericella nidulans (strain FGSC A4 / ATCC 38163 / CBS 112.46 / NRRL 194 / M139) (Aspergillus nidulans).